Consider the following 446-residue polypeptide: Nuclear envelope morphology protein 1 (446 aa).

The disordered stretch occupies residues 53–80 (VDQQYDHSSSHLKESDQNQERKNSVPKK). Residues 56-75 (QYDHSSSHLKESDQNQERKN) are compositionally biased toward basic and acidic residues. The helical transmembrane segment at 87-103 (ILIEKIASILWALLLFL) threads the bilayer. A disordered region spans residues 132 to 168 (HTDKRNRGSNASENELPVSSSNINDSSEKTNPKNCNL). Residues 139–156 (GSNASENELPVSSSNIND) are compositionally biased toward polar residues. In terms of domain architecture, FCP1 homology spans 247-424 (NTQKKKKLVI…LNLLPFLEAM (178 aa)).

This sequence belongs to the Dullard family. As to quaternary structure, component of the NEM1-SPO7 complex.

The protein resides in the endoplasmic reticulum membrane. It localises to the nucleus membrane. It catalyses the reaction O-phospho-L-seryl-[protein] + H2O = L-seryl-[protein] + phosphate. It carries out the reaction O-phospho-L-threonyl-[protein] + H2O = L-threonyl-[protein] + phosphate. In terms of biological role, catalytic component of the NEM1-SPO7 complex which acts as a phosphatase and dephosphorylates the phosphatidic acid phosphohydrolase PAH1. Essential for the formation of a spherical nucleus and meiotic division. The NEM1-SPOo7 protein phosphatase is required for efficient mitophagy under prolonged respiration, as well as for reticulophagy and pexophagy. This is Nuclear envelope morphology protein 1 (NEM1) from Saccharomyces cerevisiae (strain ATCC 204508 / S288c) (Baker's yeast).